We begin with the raw amino-acid sequence, 94 residues long: Large ribosomal subunit protein uL23 (94 aa).

Belongs to the universal ribosomal protein uL23 family. Part of the 50S ribosomal subunit. Contacts protein L29, and trigger factor when it is bound to the ribosome.

One of the early assembly proteins it binds 23S rRNA. One of the proteins that surrounds the polypeptide exit tunnel on the outside of the ribosome. Forms the main docking site for trigger factor binding to the ribosome. The chain is Large ribosomal subunit protein uL23 from Akkermansia muciniphila (strain ATCC BAA-835 / DSM 22959 / JCM 33894 / BCRC 81048 / CCUG 64013 / CIP 107961 / Muc).